The chain runs to 377 residues: Phosphatidylglycerol--prolipoprotein diacylglyceryl transferase (377 aa).

The next 4 membrane-spanning stretches (helical) occupy residues 18-38 (PVPLRAYALMIIIGIVVAVVV), 48-68 (MDPALAGEIAYWAVPFGIVGA), 93-113 (IWNGGLGIWGAIAGGALGAWL), and 119-139 (GISLALFADAAAPGIILAQAI). Residue Arg-141 participates in a 1,2-diacyl-sn-glycero-3-phospho-(1'-sn-glycerol) binding. The next 3 helical transmembrane spans lie at 177-197 (QPTFLYEFLWNLVVAAILLLV), 208-228 (LFALYVALYTFGRLWIEMLRI), and 238-258 (RVNIWTSAIVCVGAVVALLVV). A disordered region spans residues 265–377 (DVSPQEQRAL…RTRVERPPAT (113 aa)). 2 stretches are compositionally biased toward low complexity: residues 288–297 (AAGETAGETR) and 308–344 (GVDVNGADVDGADPSNVNGANVNGADPVNVNVNDADG).

It belongs to the Lgt family.

It is found in the cell membrane. It carries out the reaction L-cysteinyl-[prolipoprotein] + a 1,2-diacyl-sn-glycero-3-phospho-(1'-sn-glycerol) = an S-1,2-diacyl-sn-glyceryl-L-cysteinyl-[prolipoprotein] + sn-glycerol 1-phosphate + H(+). It functions in the pathway protein modification; lipoprotein biosynthesis (diacylglyceryl transfer). Its function is as follows. Catalyzes the transfer of the diacylglyceryl group from phosphatidylglycerol to the sulfhydryl group of the N-terminal cysteine of a prolipoprotein, the first step in the formation of mature lipoproteins. The protein is Phosphatidylglycerol--prolipoprotein diacylglyceryl transferase of Frankia alni (strain DSM 45986 / CECT 9034 / ACN14a).